The primary structure comprises 603 residues: uncharacterized protein (603 aa).

The segment at 257 to 281 (AGEAASSDHDQKISRVTRKRPREPK) is disordered.

This is an uncharacterized protein from Saccharomyces cerevisiae (strain ATCC 204508 / S288c) (Baker's yeast).